The primary structure comprises 224 residues: Large ribosomal subunit protein uL3 (224 aa).

Position 159 is an N5-methylglutamine (Gln159).

The protein belongs to the universal ribosomal protein uL3 family. In terms of assembly, part of the 50S ribosomal subunit. Forms a cluster with proteins L14 and L19. In terms of processing, methylated by PrmB.

Its function is as follows. One of the primary rRNA binding proteins, it binds directly near the 3'-end of the 23S rRNA, where it nucleates assembly of the 50S subunit. In Janthinobacterium sp. (strain Marseille) (Minibacterium massiliensis), this protein is Large ribosomal subunit protein uL3.